The chain runs to 341 residues: S-adenosylmethionine:tRNA ribosyltransferase-isomerase (341 aa).

Belongs to the QueA family. In terms of assembly, monomer.

The protein resides in the cytoplasm. It catalyses the reaction 7-aminomethyl-7-carbaguanosine(34) in tRNA + S-adenosyl-L-methionine = epoxyqueuosine(34) in tRNA + adenine + L-methionine + 2 H(+). Its pathway is tRNA modification; tRNA-queuosine biosynthesis. Transfers and isomerizes the ribose moiety from AdoMet to the 7-aminomethyl group of 7-deazaguanine (preQ1-tRNA) to give epoxyqueuosine (oQ-tRNA). The chain is S-adenosylmethionine:tRNA ribosyltransferase-isomerase from Clostridium perfringens (strain SM101 / Type A).